We begin with the raw amino-acid sequence, 798 residues long: Penicillin-binding protein 1A (798 aa).

Residues 1–9 (MIKKIITTC) lie on the Cytoplasmic side of the membrane. The helical; Signal-anchor for type II membrane protein transmembrane segment at 10–30 (MGLNNGLALFGVGLIAIAILV) threads the bilayer. Topologically, residues 31–798 (TYPKLPSLDS…NNRQQLDSLF (768 aa)) are periplasmic. The transglycosylase stretch occupies residues 50 to 218 (LTIYSSDGQV…SAYNPIVNPE (169 aa)). Glutamate 88 (proton donor; for transglycosylase activity) is an active-site residue. Residues 413-699 (TVVQEPLLQG…GTIAVPVWVE (287 aa)) are transpeptidase. Serine 460 serves as the catalytic Acyl-ester intermediate; for transpeptidase activity. Positions 734-798 (TSSDLALDNS…NNRQQLDSLF (65 aa)) are disordered. A compositionally biased stretch (polar residues) spans 782-798 (LPSNTGNNNRQQLDSLF).

In the N-terminal section; belongs to the glycosyltransferase 51 family. It in the C-terminal section; belongs to the transpeptidase family.

The protein resides in the cell inner membrane. The enzyme catalyses [GlcNAc-(1-&gt;4)-Mur2Ac(oyl-L-Ala-gamma-D-Glu-L-Lys-D-Ala-D-Ala)](n)-di-trans,octa-cis-undecaprenyl diphosphate + beta-D-GlcNAc-(1-&gt;4)-Mur2Ac(oyl-L-Ala-gamma-D-Glu-L-Lys-D-Ala-D-Ala)-di-trans,octa-cis-undecaprenyl diphosphate = [GlcNAc-(1-&gt;4)-Mur2Ac(oyl-L-Ala-gamma-D-Glu-L-Lys-D-Ala-D-Ala)](n+1)-di-trans,octa-cis-undecaprenyl diphosphate + di-trans,octa-cis-undecaprenyl diphosphate + H(+). It carries out the reaction Preferential cleavage: (Ac)2-L-Lys-D-Ala-|-D-Ala. Also transpeptidation of peptidyl-alanyl moieties that are N-acyl substituents of D-alanine.. The protein operates within cell wall biogenesis; peptidoglycan biosynthesis. Its function is as follows. Cell wall formation. Synthesis of cross-linked peptidoglycan from the lipid intermediates. The enzyme has a penicillin-insensitive transglycosylase N-terminal domain (formation of linear glycan strands) and a penicillin-sensitive transpeptidase C-terminal domain (cross-linking of the peptide subunits). The polypeptide is Penicillin-binding protein 1A (mrcA) (Neisseria flavescens).